The chain runs to 440 residues: Cell division protein FtsA (440 aa).

Positions Val-396 to Glu-440 are disordered.

It belongs to the FtsA/MreB family. Homodimer. Interacts with FtsZ.

It localises to the cell membrane. Functionally, cell division protein that is required for the assembly of the Z ring. May serve as a membrane anchor for the Z ring. Binds and hydrolyzes ATP. Also involved in sporulation. The polypeptide is Cell division protein FtsA (Bacillus subtilis (strain 168)).